The following is a 189-amino-acid chain: Endoribonuclease YbeY (189 aa).

3 residues coordinate Zn(2+): H146, H150, and H156.

Belongs to the endoribonuclease YbeY family. The cofactor is Zn(2+).

It localises to the cytoplasm. Single strand-specific metallo-endoribonuclease involved in late-stage 70S ribosome quality control and in maturation of the 3' terminus of the 16S rRNA. The polypeptide is Endoribonuclease YbeY (Prochlorococcus marinus (strain MIT 9211)).